Reading from the N-terminus, the 201-residue chain is Acireductone dioxygenase 2 (201 aa).

Residues H83, H85, E89, and H129 each contribute to the Fe(2+) site. Ni(2+) contacts are provided by H83, H85, E89, and H129.

Belongs to the acireductone dioxygenase (ARD) family. Fe(2+) serves as cofactor. The cofactor is Ni(2+).

It localises to the cytoplasm. The protein resides in the nucleus. It catalyses the reaction 1,2-dihydroxy-5-(methylsulfanyl)pent-1-en-3-one + O2 = 4-methylsulfanyl-2-oxobutanoate + formate + 2 H(+). It carries out the reaction 1,2-dihydroxy-5-(methylsulfanyl)pent-1-en-3-one + O2 = 3-(methylsulfanyl)propanoate + CO + formate + 2 H(+). It participates in amino-acid biosynthesis; L-methionine biosynthesis via salvage pathway; L-methionine from S-methyl-5-thio-alpha-D-ribose 1-phosphate: step 5/6. Its function is as follows. Catalyzes 2 different reactions between oxygen and the acireductone 1,2-dihydroxy-3-keto-5-methylthiopentene (DHK-MTPene) depending upon the metal bound in the active site. Fe-containing acireductone dioxygenase (Fe-ARD) produces formate and 2-keto-4-methylthiobutyrate (KMTB), the alpha-ketoacid precursor of methionine in the methionine recycle pathway. Ni-containing acireductone dioxygenase (Ni-ARD) produces methylthiopropionate, carbon monoxide and formate, and does not lie on the methionine recycle pathway. In Coprinopsis cinerea (strain Okayama-7 / 130 / ATCC MYA-4618 / FGSC 9003) (Inky cap fungus), this protein is Acireductone dioxygenase 2.